Consider the following 214-residue polypeptide: Probable GTP-binding protein EngB (214 aa).

Residues asparagine 22–proline 194 enclose the EngB-type G domain. Residues glycine 30 to serine 37, glycine 57 to leucine 61, aspartate 75 to glycine 78, threonine 142 to aspartate 145, and phenylalanine 173 to alanine 175 contribute to the GTP site. Mg(2+)-binding residues include serine 37 and threonine 59.

The protein belongs to the TRAFAC class TrmE-Era-EngA-EngB-Septin-like GTPase superfamily. EngB GTPase family. It depends on Mg(2+) as a cofactor.

Its function is as follows. Necessary for normal cell division and for the maintenance of normal septation. In Citrifermentans bemidjiense (strain ATCC BAA-1014 / DSM 16622 / JCM 12645 / Bem) (Geobacter bemidjiensis), this protein is Probable GTP-binding protein EngB.